The following is a 293-amino-acid chain: Ribosomal protein L11 methyltransferase (293 aa).

S-adenosyl-L-methionine is bound by residues Thr-145, Gly-166, Asp-188, and Asn-230.

Belongs to the methyltransferase superfamily. PrmA family.

It is found in the cytoplasm. It catalyses the reaction L-lysyl-[protein] + 3 S-adenosyl-L-methionine = N(6),N(6),N(6)-trimethyl-L-lysyl-[protein] + 3 S-adenosyl-L-homocysteine + 3 H(+). Functionally, methylates ribosomal protein L11. In Enterobacter sp. (strain 638), this protein is Ribosomal protein L11 methyltransferase.